Consider the following 271-residue polypeptide: Thiamine thiazole synthase (271 aa).

NAD(+)-binding positions include Ser39, 58–59 (ER), Gly66, Val130, and 158–160 (HVD). Residues Asp160 and His175 each contribute to the Fe cation site. NAD(+) is bound at residue Met225. Arg235 is a glycine binding site.

This sequence belongs to the THI4 family. As to quaternary structure, homooctamer; tetramer of dimers. Fe(2+) serves as cofactor.

It carries out the reaction hydrogen sulfide + glycine + NAD(+) = ADP-5-ethyl-4-methylthiazole-2-carboxylate + nicotinamide + 3 H2O + H(+). Its pathway is cofactor biosynthesis; thiamine diphosphate biosynthesis. In terms of biological role, involved in the biosynthesis of the thiazole moiety of thiamine. Catalyzes the conversion of NAD and glycine to adenosine diphosphate 5-(2-hydroxyethyl)-4-methylthiazole-2-carboxylate (ADT), an adenylated thiazole intermediate, using free sulfide as a source of sulfur. The protein is Thiamine thiazole synthase of Metallosphaera sedula (strain ATCC 51363 / DSM 5348 / JCM 9185 / NBRC 15509 / TH2).